We begin with the raw amino-acid sequence, 601 residues long: Elongation factor 4 (601 aa).

The region spanning 4–186 is the tr-type G domain; it reads SFIRNFAIIA…SIVHLVPPPK (183 aa). GTP is bound by residues 16 to 21 and 133 to 136; these read DHGKST and NKID.

It belongs to the TRAFAC class translation factor GTPase superfamily. Classic translation factor GTPase family. LepA subfamily.

It is found in the cell inner membrane. The enzyme catalyses GTP + H2O = GDP + phosphate + H(+). Its function is as follows. Required for accurate and efficient protein synthesis under certain stress conditions. May act as a fidelity factor of the translation reaction, by catalyzing a one-codon backward translocation of tRNAs on improperly translocated ribosomes. Back-translocation proceeds from a post-translocation (POST) complex to a pre-translocation (PRE) complex, thus giving elongation factor G a second chance to translocate the tRNAs correctly. Binds to ribosomes in a GTP-dependent manner. This is Elongation factor 4 from Koribacter versatilis (strain Ellin345).